A 225-amino-acid polypeptide reads, in one-letter code: C-type lectin domain-containing protein 91 (225 aa).

Positions 1-21 are cleaved as a signal peptide; the sequence is MRSTYILIIVPLIIIGGGVVA. In terms of domain architecture, C-type lectin spans 85-215; the sequence is YSDSCYFIET…CTMAFKSICE (131 aa). Disulfide bonds link Cys106–Cys214 and Cys185–Cys206. Residue Asn217 is glycosylated (N-linked (GlcNAc...) asparagine).

Its subcellular location is the secreted. This chain is C-type lectin domain-containing protein 91 (clec-91), found in Caenorhabditis elegans.